We begin with the raw amino-acid sequence, 326 residues long: Putative cell agglutination protein pfl9 (326 aa).

The first 21 residues, 1 to 21, serve as a signal peptide directing secretion; that stretch reads MNVVKYIIFSFALAPLLLVNA. Asn25 carries an N-linked (GlcNAc...) asparagine glycan. Repeat copies occupy residues 103–137 and 138–175. The segment at 103 to 175 is 2 X 36 AA approximate tandem repeats; it reads STITTTITSG…GEVEVITPSC (73 aa). The DIPSY domain occupies 164–326; sequence QSGEVEVITP…RANDVTLQLY (163 aa).

The protein belongs to the mam3/map4 family.

The protein localises to the cell surface. Its function is as follows. May be involved in agglutination during conjugation or other aspects of colony formation. Induces flocculation when overexpressed. The polypeptide is Putative cell agglutination protein pfl9 (Schizosaccharomyces pombe (strain 972 / ATCC 24843) (Fission yeast)).